The following is a 304-amino-acid chain: Protease HtpX homolog (304 aa).

2 helical membrane-spanning segments follow: residues 14–34 and 39–59; these read IFIILGFFIFVLMVGAAIGII and YLNGLILAAVIGAFYILIMVM. A Zn(2+)-binding site is contributed by His-144. Residue Glu-145 is part of the active site. Zn(2+) is bound at residue His-148. 2 consecutive transmembrane segments (helical) span residues 159–179 and 202–222; these read IAIALVAVIAILSDLAMRMIF and AIIYIVALIFVILAPIIATAI. Glu-231 is a binding site for Zn(2+).

It belongs to the peptidase M48B family. Zn(2+) is required as a cofactor.

It localises to the cell membrane. This is Protease HtpX homolog from Listeria monocytogenes serotype 4b (strain CLIP80459).